A 398-amino-acid polypeptide reads, in one-letter code: Acetate kinase (398 aa).

Asparagine 10 serves as a coordination point for Mg(2+). Lysine 17 provides a ligand contact to ATP. Arginine 91 is a substrate binding site. Catalysis depends on aspartate 148, which acts as the Proton donor/acceptor. Residues 208-212, 283-285, and 331-335 each bind ATP; these read HLGNG, DCR, and GIGEN. Glutamate 385 is a binding site for Mg(2+).

Belongs to the acetokinase family. As to quaternary structure, homodimer. Mg(2+) is required as a cofactor. Mn(2+) serves as cofactor.

The protein resides in the cytoplasm. The enzyme catalyses acetate + ATP = acetyl phosphate + ADP. Its pathway is metabolic intermediate biosynthesis; acetyl-CoA biosynthesis; acetyl-CoA from acetate: step 1/2. Functionally, catalyzes the formation of acetyl phosphate from acetate and ATP. Can also catalyze the reverse reaction. This chain is Acetate kinase, found in Shewanella pealeana (strain ATCC 700345 / ANG-SQ1).